The chain runs to 148 residues: Lysozyme C (148 aa).

The signal sequence occupies residues 1–18 (MKALIILGLVLLSVTVQG). A C-type lysozyme domain is found at 19–148 (KIFERCELAR…VSQYVEGCGV (130 aa)). 4 disulfides stabilise this stretch: C24-C146, C48-C134, C83-C99, and C95-C113. Residues E53 and D71 contribute to the active site.

Belongs to the glycosyl hydrolase 22 family. In terms of assembly, monomer.

The catalysed reaction is Hydrolysis of (1-&gt;4)-beta-linkages between N-acetylmuramic acid and N-acetyl-D-glucosamine residues in a peptidoglycan and between N-acetyl-D-glucosamine residues in chitodextrins.. Functionally, lysozymes have primarily a bacteriolytic function; those in tissues and body fluids are associated with the monocyte-macrophage system and enhance the activity of immunoagents. The sequence is that of Lysozyme C (LYZ) from Colobus angolensis (Angolan colobus).